Consider the following 128-residue polypeptide: LIM domain-containing protein 2 (128 aa).

Met-1 carries the post-translational modification N-acetylmethionine. Residues 1-25 are disordered; the sequence is MFQAAGAAQATPSHEAKGSSGNSTV. In terms of domain architecture, LIM zinc-binding spans 39–99; it reads ETCAACQKTV…KPHFQQLFKS (61 aa). Cys-41, Cys-44, His-62, Cys-65, Cys-68, Cys-71, Cys-89, and His-92 together coordinate Zn(2+).

As to quaternary structure, interacts with ILK.

It localises to the cytoplasm. Its subcellular location is the nucleus. Functionally, acts as an activator of the protein-kinase ILK, thereby regulating cell motility. The sequence is that of LIM domain-containing protein 2 (Limd2) from Rattus norvegicus (Rat).